A 251-amino-acid chain; its full sequence is Aspartate/glutamate leucyltransferase (251 aa).

Belongs to the R-transferase family. Bpt subfamily.

It is found in the cytoplasm. The catalysed reaction is N-terminal L-glutamyl-[protein] + L-leucyl-tRNA(Leu) = N-terminal L-leucyl-L-glutamyl-[protein] + tRNA(Leu) + H(+). It catalyses the reaction N-terminal L-aspartyl-[protein] + L-leucyl-tRNA(Leu) = N-terminal L-leucyl-L-aspartyl-[protein] + tRNA(Leu) + H(+). Functions in the N-end rule pathway of protein degradation where it conjugates Leu from its aminoacyl-tRNA to the N-termini of proteins containing an N-terminal aspartate or glutamate. This is Aspartate/glutamate leucyltransferase from Xanthomonas oryzae pv. oryzae (strain MAFF 311018).